We begin with the raw amino-acid sequence, 301 residues long: 3-dehydroquinate dehydratase (301 aa).

Positions 1–221 (MLQYGVLICG…YYAALLALGI (221 aa)) are 3-dehydroquinate dehydratase. 3-dehydroquinate is bound by residues 32-34 (ELR) and Arg-63. The active-site Proton donor/acceptor is the His-119. Lys-145 functions as the Schiff-base intermediate with substrate in the catalytic mechanism. Residues Arg-183, Thr-202, and Gln-206 each contribute to the 3-dehydroquinate site. Residues 222-301 (TPSGGGLPAL…QMCKAVQLVA (80 aa)) enclose the Chorismate mutase domain.

This sequence belongs to the type-I 3-dehydroquinase family. In terms of assembly, homodimer.

It carries out the reaction 3-dehydroquinate = 3-dehydroshikimate + H2O. It functions in the pathway metabolic intermediate biosynthesis; chorismate biosynthesis; chorismate from D-erythrose 4-phosphate and phosphoenolpyruvate: step 3/7. Functionally, involved in the third step of the chorismate pathway, which leads to the biosynthesis of aromatic amino acids. Catalyzes the cis-dehydration of 3-dehydroquinate (DHQ) and introduces the first double bond of the aromatic ring to yield 3-dehydroshikimate. This is 3-dehydroquinate dehydratase from Pyrobaculum aerophilum (strain ATCC 51768 / DSM 7523 / JCM 9630 / CIP 104966 / NBRC 100827 / IM2).